The chain runs to 207 residues: 2,3-bisphosphoglycerate-dependent phosphoglycerate mutase (207 aa).

Residues 10 to 17, 23 to 24, R62, 89 to 92, K100, 116 to 117, and 160 to 161 each bind substrate; these read RHGQSEWN, TG, ERDY, RR, and GN. The active-site Tele-phosphohistidine intermediate is the H11. The active-site Proton donor/acceptor is the E89.

Belongs to the phosphoglycerate mutase family. BPG-dependent PGAM subfamily. In terms of assembly, homodimer.

The catalysed reaction is (2R)-2-phosphoglycerate = (2R)-3-phosphoglycerate. It functions in the pathway carbohydrate degradation; glycolysis; pyruvate from D-glyceraldehyde 3-phosphate: step 3/5. In terms of biological role, catalyzes the interconversion of 2-phosphoglycerate and 3-phosphoglycerate. This Nitrobacter hamburgensis (strain DSM 10229 / NCIMB 13809 / X14) protein is 2,3-bisphosphoglycerate-dependent phosphoglycerate mutase.